The following is a 317-amino-acid chain: tRNA dimethylallyltransferase (317 aa).

An ATP-binding site is contributed by 21–28 (GPTASGKS). 23 to 28 (TASGKS) provides a ligand contact to substrate. Positions 46 to 49 (DSMQ) are interaction with substrate tRNA.

Belongs to the IPP transferase family. Monomer. Mg(2+) serves as cofactor.

It carries out the reaction adenosine(37) in tRNA + dimethylallyl diphosphate = N(6)-dimethylallyladenosine(37) in tRNA + diphosphate. Functionally, catalyzes the transfer of a dimethylallyl group onto the adenine at position 37 in tRNAs that read codons beginning with uridine, leading to the formation of N6-(dimethylallyl)adenosine (i(6)A). The chain is tRNA dimethylallyltransferase from Nitrobacter hamburgensis (strain DSM 10229 / NCIMB 13809 / X14).